A 130-amino-acid polypeptide reads, in one-letter code: MATLRSFVLVDNGGTGDVTVVPVSNANGVAEWLSNNSRSQAYRVTASYRASGADKRKYTIKLEVPKIVTQVVNGVELPVSAWKAYASIDLTIPIFAATDDVTVISKSLAGLFKVGNPIADAISSQSGFYA.

Residues 31 to 104 (EWLSNNSRSQ…FAATDDVTVI (74 aa)) are viral RNA-binding.

It belongs to the Leviviricetes capsid protein family. In terms of assembly, homodimer. The capsid proteins form dimers that assemble by group of 5. Twelve such pentamers are linked together with free dimers. The homodimers binds to the viral RNA via an operator hairpin, but also to many other RNA sequences in the viral genome; this interaction probably shifts the virus from the replicative to the assembly phase and ensures specific encapsidation of the viral genome.

The protein resides in the virion. Capsid protein self-assembles to form an icosahedral capsid with a T=3 symmetry, about 26 nm in diameter, and consisting of 89 capsid proteins dimers (178 capsid proteins). Involved in viral genome encapsidation through the interaction between a capsid protein dimer and the multiple packaging signals present in the RNA genome. The capsid also contains 1 copy of the A2 maturation protein. Functionally, acts as a translational repressor of viral replicase synthesis late in infection. This latter function is the result of capsid protein interaction with an RNA hairpin which contains the replicase ribosome-binding site. The sequence is that of Capsid protein from Escherichia coli (Bacteriophage JP34).